Reading from the N-terminus, the 444-residue chain is Chromosomal replication initiator protein DnaA (444 aa).

The domain I, interacts with DnaA modulators stretch occupies residues 1 to 73 (MDSSAQQLWH…AEVVQDIVGY (73 aa)). The tract at residues 73–104 (YPVEIQLTAQQGDLIAIFQPHTSLESELSPTN) is domain II. Residues 105–321 (QLNPKYNFSR…GALIRATTYI (217 aa)) form a domain III, AAA+ region region. ATP contacts are provided by G149, G151, K152, and T153. Positions 322–444 (SISGLPMTVE…ERINSLSRNQ (123 aa)) are domain IV, binds dsDNA.

This sequence belongs to the DnaA family. Oligomerizes as a right-handed, spiral filament on DNA at oriC.

It localises to the cytoplasm. Its function is as follows. Plays an essential role in the initiation and regulation of chromosomal replication. ATP-DnaA binds to the origin of replication (oriC) to initiate formation of the DNA replication initiation complex once per cell cycle. Binds the DnaA box (a 9 base pair repeat at the origin) and separates the double-stranded (ds)DNA. Forms a right-handed helical filament on oriC DNA; dsDNA binds to the exterior of the filament while single-stranded (ss)DNA is stabiized in the filament's interior. The ATP-DnaA-oriC complex binds and stabilizes one strand of the AT-rich DNA unwinding element (DUE), permitting loading of DNA polymerase. After initiation quickly degrades to an ADP-DnaA complex that is not apt for DNA replication. Binds acidic phospholipids. This Microcystis aeruginosa (strain NIES-843 / IAM M-2473) protein is Chromosomal replication initiator protein DnaA.